A 25-amino-acid polypeptide reads, in one-letter code: Dermaseptin-5.2TR (25 aa).

A Valine amide modification is found at valine 25.

In terms of tissue distribution, expressed by the skin glands.

It is found in the secreted. Functionally, has antimicrobial activity. This chain is Dermaseptin-5.2TR, found in Phyllomedusa trinitatis (Trinidad leaf frog).